The sequence spans 358 residues: 3-dehydroquinate synthase (358 aa).

NAD(+) contacts are provided by residues Gly102 to Asp106, Thr126 to Thr127, Lys138, and Lys147. Zn(2+) is bound by residues Glu180, His243, and His260.

The protein belongs to the sugar phosphate cyclases superfamily. Dehydroquinate synthase family. It depends on Co(2+) as a cofactor. Zn(2+) serves as cofactor. Requires NAD(+) as cofactor.

It localises to the cytoplasm. The enzyme catalyses 7-phospho-2-dehydro-3-deoxy-D-arabino-heptonate = 3-dehydroquinate + phosphate. The protein operates within metabolic intermediate biosynthesis; chorismate biosynthesis; chorismate from D-erythrose 4-phosphate and phosphoenolpyruvate: step 2/7. Catalyzes the conversion of 3-deoxy-D-arabino-heptulosonate 7-phosphate (DAHP) to dehydroquinate (DHQ). The sequence is that of 3-dehydroquinate synthase from Shouchella clausii (strain KSM-K16) (Alkalihalobacillus clausii).